The sequence spans 403 residues: Argininosuccinate synthase (403 aa).

ATP is bound by residues 13–21 (AYSGGLDTS) and A40. The L-citrulline site is built by Y92 and S97. G122 contacts ATP. Positions 124, 128, and 129 each coordinate L-aspartate. L-citrulline is bound at residue N128. Residues R132, S181, S190, E266, and Y278 each contribute to the L-citrulline site.

It belongs to the argininosuccinate synthase family. Type 1 subfamily. Homotetramer.

Its subcellular location is the cytoplasm. It carries out the reaction L-citrulline + L-aspartate + ATP = 2-(N(omega)-L-arginino)succinate + AMP + diphosphate + H(+). It participates in amino-acid biosynthesis; L-arginine biosynthesis; L-arginine from L-ornithine and carbamoyl phosphate: step 2/3. The chain is Argininosuccinate synthase from Aliivibrio fischeri (strain MJ11) (Vibrio fischeri).